A 407-amino-acid chain; its full sequence is tRNA (guanine-N(7)-)-methyltransferase non-catalytic subunit wuho (407 aa).

WD repeat units follow at residues 83–124 (AIEV…ARLL), 171–210 (GHLS…DIHS), and 214–252 (GHKE…ELLI).

The protein belongs to the WD repeat TRM82 family. As to quaternary structure, forms a heterodimer with the catalytic subunit Mettl1. Interacts with mei-P26 and weakly interacts with bgcn; required for the function or formation of the mei-P26-bgcn-bam-sxl complex. Interacts with nanos; may be involved in mei-P26-dependent derepression of the BMP signaling pathway. Interacts with Myc; the interaction may be mediated by mei-P26 and may be involved in the regulation of ribosome biogenesis. In terms of tissue distribution, in testis, it is present at high level in hub cells, a niche for germline stem cells of testis. Ubiquitously expressed in all testicular cells throughout spermatogenesis. Ubiquitously expressed in all germline and somatic cells of the ovary.

It is found in the nucleus. The protein resides in the cytoplasm. The protein operates within tRNA modification; N(7)-methylguanine-tRNA biosynthesis. Its function is as follows. Required for the Mettl1-dependent formation of N(7)-methylguanine at position 46 (m7G46) in tRNA. In the Mettl1-wuho methyltransferase complex, it is required to stabilize and induce conformational changes of the catalytic subunit. Required for binding of nanos mRNA and repression of translation by the mei-P26-bgcn-bam-sxl complex. May cooperate with mei-P26 and nanos to derepress the BMP signaling pathway. May cooperate with mei-P26 to suppress expression of a subset of microRNAs. May cooperate with mei-P26 to regulate bam expression levels in germline cells during gametogenesis. Required to promote mitosis to meiosis transition during gametogenesis. May regulate germline cell division in part by regulating ribosome biogenesis. This chain is tRNA (guanine-N(7)-)-methyltransferase non-catalytic subunit wuho, found in Drosophila ananassae (Fruit fly).